The following is a 194-amino-acid chain: Imidazoleglycerol-phosphate dehydratase (194 aa).

It belongs to the imidazoleglycerol-phosphate dehydratase family.

Its subcellular location is the cytoplasm. The catalysed reaction is D-erythro-1-(imidazol-4-yl)glycerol 3-phosphate = 3-(imidazol-4-yl)-2-oxopropyl phosphate + H2O. Its pathway is amino-acid biosynthesis; L-histidine biosynthesis; L-histidine from 5-phospho-alpha-D-ribose 1-diphosphate: step 6/9. The polypeptide is Imidazoleglycerol-phosphate dehydratase (Chlorobaculum tepidum (strain ATCC 49652 / DSM 12025 / NBRC 103806 / TLS) (Chlorobium tepidum)).